The chain runs to 236 residues: Probable transmembrane ascorbate ferrireductase 4 (236 aa).

The 197-residue stretch at 14 to 210 folds into the Cytochrome b561 domain; the sequence is FARLSGLVVA…LGCIVITAAI (197 aa). Transmembrane regions (helical) follow at residues 17–37, 42–62, and 76–96; these read LSGL…PNLG, TLHP…AILI, and VHLW…WTKF. Residues histidine 44, histidine 77, and histidine 110 each contribute to the heme b site. 3 helical membrane-spanning segments follow: residues 112–132, 144–164, and 191–211; these read WMGL…FMSF, TFLP…IATA, and VNGL…AAIL. Heme b is bound at residue histidine 149.

As to quaternary structure, homodimer. It depends on heme b as a cofactor.

Its subcellular location is the membrane. It carries out the reaction Fe(3+)(out) + L-ascorbate(in) = monodehydro-L-ascorbate radical(in) + Fe(2+)(out) + H(+). Functionally, two-heme-containing cytochrome. May catalyze ascorbate-dependent trans-membrane ferric-chelate reduction. This Arabidopsis thaliana (Mouse-ear cress) protein is Probable transmembrane ascorbate ferrireductase 4 (CYB561D).